A 151-amino-acid polypeptide reads, in one-letter code: Large ribosomal subunit protein uL15 (151 aa).

The interval 1 to 60 is disordered; that stretch reads MAENNPLKIHNLRPAPGAKTAKTRVGRGEASKGKTAGRGTKGTKARYQVPERFEGGQMPL.

It belongs to the universal ribosomal protein uL15 family. As to quaternary structure, part of the 50S ribosomal subunit.

In terms of biological role, binds to the 23S rRNA. The sequence is that of Large ribosomal subunit protein uL15 from Streptomyces coelicolor (strain ATCC BAA-471 / A3(2) / M145).